The chain runs to 513 residues: MERPVTELVLNPGAVPLAEWKAIYRGASARLAESAWPVIAESAAAVQRILAKGEPVYGINTGFGKLASVRIGDADLETLQRNIVLSHAAGVGEPSPVPVIRLMMALKLASLAQGASGVRVETVRMLEEMLVEGLTPVVPCQGSVGASGDLAPLSHMAATMIGVGEIFVGGQRLPAAQALAQAGLEPLTLGPKEGLALLNGTQFSTANALAGLFEAERLFQSALVTGALSTEAAKGSDTPFDPRIHTLRRHVGQIETAAALRALMSASEIRASHLKEDERVQDPYCLRCQPQVMGAALDILRQAATTLATEANCVSDNPLIFPEADEALSGGNFHAEPVAFAADMIALAVCEIGSIAERRIAMLVDPALSGLPAFLTPKPGLNSGFMIPQVTAAALVSENKQRAYPASVDSIPTSANQEDHVSMAAHGARRLLAMVENADAVLGIELLAAAQGCDFHAPLRSSAALEAVRALTRSKVPHLSDDRHFHPDMEAANTLVRSGAVIAAVGALPGVTA.

The 5-imidazolinone (Ala-Gly) cross-link spans 146–148 (ASG). 2,3-didehydroalanine (Ser) is present on Ser147.

This sequence belongs to the PAL/histidase family. Post-translationally, contains an active site 4-methylidene-imidazol-5-one (MIO), which is formed autocatalytically by cyclization and dehydration of residues Ala-Ser-Gly.

It localises to the cytoplasm. The enzyme catalyses L-histidine = trans-urocanate + NH4(+). Its pathway is amino-acid degradation; L-histidine degradation into L-glutamate; N-formimidoyl-L-glutamate from L-histidine: step 1/3. This chain is Histidine ammonia-lyase, found in Caulobacter vibrioides (strain NA1000 / CB15N) (Caulobacter crescentus).